The primary structure comprises 294 residues: ATP synthase gamma chain (294 aa).

It belongs to the ATPase gamma chain family. As to quaternary structure, F-type ATPases have 2 components, CF(1) - the catalytic core - and CF(0) - the membrane proton channel. CF(1) has five subunits: alpha(3), beta(3), gamma(1), delta(1), epsilon(1). CF(0) has three main subunits: a, b and c.

It is found in the cell inner membrane. Produces ATP from ADP in the presence of a proton gradient across the membrane. The gamma chain is believed to be important in regulating ATPase activity and the flow of protons through the CF(0) complex. This is ATP synthase gamma chain from Rhizorhabdus wittichii (strain DSM 6014 / CCUG 31198 / JCM 15750 / NBRC 105917 / EY 4224 / RW1) (Sphingomonas wittichii).